The following is a 103-amino-acid chain: Muscarinic toxin BM14 (103 aa).

Residues 1 to 21 form the signal peptide; it reads MKTLLLTLVVVTIICLDLGYT. Intrachain disulfides connect cysteine 24–cysteine 45, cysteine 27–cysteine 37, cysteine 38–cysteine 72, cysteine 76–cysteine 90, and cysteine 91–cysteine 96.

Belongs to the three-finger toxin family. Ancestral subfamily. Orphan group XVII sub-subfamily. As to expression, expressed by the venom gland.

The protein localises to the secreted. Functionally, this toxin inhibits the binding of [3H]quinuclidinyl benzilate to the M2 muscarinic acetylcholine (mAchR) receptor subtype (CHRM2). This chain is Muscarinic toxin BM14, found in Bungarus multicinctus (Many-banded krait).